A 384-amino-acid chain; its full sequence is MKITGLFKEFFESEKSSGLFLISCTLFSLVIANSAIANSYLHFWHANLAGNSLEYWINDGLMTIFFLLIGLELEREVYDGELSNIKDAMLPIFGAIGGMIVPAGLFLVMNFGTKTQSGAGIPMATDIAFALAILSLLGNKIPLSLKIFLTALAVIDDLGAILIIAVFYTKTLLWTNLCIALGIFGFLLILNRLKIRNLIPYLIGGVFMWYFMLHSGVHATITGVLLAFAIPFGNGDSRSTSYILQHFLHKPVAFFILPLFALANTAIVLSSNISETLIQNYSIGIALGLIIGKPLGIFLLSMLAVSLGICKLPDDLNWKSILAVGFLGGIGFTMSIFITLLAFNDDTIINNAKFVILISSLIAGIIGYFSLKYVLKNTIIENKN.

The next 11 membrane-spanning stretches (helical) occupy residues 17–37 (SGLF…SAIA), 53–73 (LEYW…GLEL), 89–109 (MLPI…FLVM), 118–138 (GAGI…SLLG), 147–167 (IFLT…IAVF), 171–191 (TLLW…LILN), 198–218 (LIPY…SGVH), 251–271 (PVAF…VLSS), 283–303 (IGIA…LSML), 321–341 (ILAV…ITLL), and 354–374 (FVIL…LKYV).

Belongs to the NhaA Na(+)/H(+) (TC 2.A.33) antiporter family.

It is found in the cell inner membrane. The enzyme catalyses Na(+)(in) + 2 H(+)(out) = Na(+)(out) + 2 H(+)(in). In terms of biological role, na(+)/H(+) antiporter that extrudes sodium in exchange for external protons. In Flavobacterium psychrophilum (strain ATCC 49511 / DSM 21280 / CIP 103535 / JIP02/86), this protein is Na(+)/H(+) antiporter NhaA.